The following is a 984-amino-acid chain: Mineralocorticoid receptor (984 aa).

The interval 1 to 602 (METKGYHSLP…STGSSRPSKI (602 aa)) is modulating. Residues 231 to 243 (QGTPLTCSPNVEN) are compositionally biased toward polar residues. Disordered stretches follow at residues 231-329 (QGTP…AAST) and 346-369 (SGTS…EKGA). A phosphoserine mark is found at Ser-250, Ser-259, Ser-283, Ser-287, and Ser-299. Residues 259–291 (SPLSSPLSSMKSSISSPPSHCSVKSPVSSPNNV) are compositionally biased toward low complexity. Residues 292-329 (TLRSSVSSPANINNSRCSVSSPSNTNNRSTLSSPAAST) show a composition bias toward polar residues. The segment covering 346–355 (SGTSAGSSTS) has biased composition (low complexity). Zn(2+) contacts are provided by Cys-603, Cys-606, Cys-620, Cys-623, Cys-639, Cys-645, Cys-655, and Cys-658. 2 NR C4-type zinc fingers span residues 603 to 623 (CLVC…CGSC) and 639 to 663 (CAGR…LQKC). The nuclear receptor DNA-binding region spans 603–668 (CLVCGDEASG…RLQKCLQAGM (66 aa)). The interval 669–725 (NLGARKSKKLGKLKGIHEEQPQQQQPPPPPPPPQSPEEGTTYIAPAKEPSVNTALVP) is hinge. The disordered stretch occupies residues 684 to 710 (IHEEQPQQQQPPPPPPPPQSPEEGTTY). The span at 692 to 703 (QQPPPPPPPPQS) shows a compositional bias: pro residues. The region spanning 726 to 964 (QLSTISRALT…EFPAMLVEII (239 aa)) is the NR LBD domain. Residues Asn-770 and Gln-776 each coordinate 21-hydroxyprogesterone. Aldosterone-binding residues include Asn-770 and Gln-776. Residues Asn-770 and Gln-776 each contribute to the progesterone site. Residues 782 to 785 (KWAK) form an important for coactivator binding region. 21-hydroxyprogesterone is bound by residues Arg-817 and Thr-945. Residues Arg-817 and Thr-945 each coordinate aldosterone. Progesterone is bound by residues Arg-817 and Thr-945.

Belongs to the nuclear hormone receptor family. NR3 subfamily. As to quaternary structure, heteromultimeric cytoplasmic complex with HSP90, HSP70, and FKBP4, in the absence of ligand. After ligand binding, it translocates to the nucleus and binds to DNA as a homodimer and as a heterodimer with NR3C1. Binds the coactivator NCOA2. May interact with HSD11B2 in the absence of ligand. Binds the coactivators NCOA1, TIF1 and NRIP1. Post-translationally, phosphorylated.

The protein resides in the cytoplasm. It localises to the nucleus. It is found in the endoplasmic reticulum membrane. Its function is as follows. Receptor for both mineralocorticoids (MC) such as aldosterone and glucocorticoids (GC) such as corticosterone or cortisol. Binds to mineralocorticoid response elements (MRE) and transactivates target genes. The effect of MC is to increase ion and water transport and thus raise extracellular fluid volume and blood pressure and lower potassium levels. This Aotus nancymaae (Ma's night monkey) protein is Mineralocorticoid receptor (NR3C2).